Here is a 161-residue protein sequence, read N- to C-terminus: Large ribosomal subunit protein uL30m (161 aa).

Residues 1–34 (MAGILRSIVQRPPGRLQTATKGVEPLVCVDWIRH) constitute a mitochondrion transit peptide.

Belongs to the universal ribosomal protein uL30 family. As to quaternary structure, component of the mitochondrial ribosome large subunit (39S) which comprises a 16S rRNA and about 50 distinct proteins.

Its subcellular location is the mitochondrion. This Bos taurus (Bovine) protein is Large ribosomal subunit protein uL30m (MRPL30).